We begin with the raw amino-acid sequence, 351 residues long: Mediator of RNA polymerase II transcription subunit 18 (351 aa).

Positions 153–231 (GNGDPIDIDT…LPQSLSNGVS (79 aa)) are disordered. Positions 163 to 204 (NNDKQGDNNTDKPKQEHDGKLPEAIDEDIIKNGDEKKTTHDD) are enriched in basic and acidic residues. Residues 205–216 (NDSDIMEIDEPN) show a composition bias toward acidic residues. Positions 217 to 231 (PETQTLPQSLSNGVS) are enriched in polar residues.

The protein belongs to the Mediator complex subunit 18 family. Component of the Mediator complex.

The protein localises to the nucleus. Its function is as follows. Component of the Mediator complex, a coactivator involved in the regulated transcription of nearly all RNA polymerase II-dependent genes. Mediator functions as a bridge to convey information from gene-specific regulatory proteins to the basal RNA polymerase II transcription machinery. Mediator is recruited to promoters by direct interactions with regulatory proteins and serves as a scaffold for the assembly of a functional preinitiation complex with RNA polymerase II and the general transcription factors. This chain is Mediator of RNA polymerase II transcription subunit 18 (SRB5), found in Candida albicans (strain SC5314 / ATCC MYA-2876) (Yeast).